Consider the following 115-residue polypeptide: Large ribosomal subunit protein bL20c (115 aa).

The protein belongs to the bacterial ribosomal protein bL20 family.

It is found in the plastid. It localises to the chloroplast. Functionally, binds directly to 23S ribosomal RNA and is necessary for the in vitro assembly process of the 50S ribosomal subunit. It is not involved in the protein synthesizing functions of that subunit. In Chlorella vulgaris (Green alga), this protein is Large ribosomal subunit protein bL20c (rpl20).